Reading from the N-terminus, the 75-residue chain is Theromacin (75 aa).

5 disulfides stabilise this stretch: cysteine 2–cysteine 9, cysteine 24–cysteine 28, cysteine 31–cysteine 73, cysteine 39–cysteine 47, and cysteine 57–cysteine 59.

The protein belongs to the macin family.

The protein resides in the secreted. Its function is as follows. Has a bactericial activity. The chain is Theromacin from Hirudo medicinalis (Medicinal leech).